Reading from the N-terminus, the 422-residue chain is Serine--tRNA ligase (422 aa).

Residue 231–233 coordinates L-serine; the sequence is TSE. Position 262–264 (262–264) interacts with ATP; that stretch reads RQE. Glutamate 285 contacts L-serine. Residue 349–352 participates in ATP binding; sequence EISS. Position 384 (serine 384) interacts with L-serine.

The protein belongs to the class-II aminoacyl-tRNA synthetase family. Type-1 seryl-tRNA synthetase subfamily. In terms of assembly, homodimer. The tRNA molecule binds across the dimer.

It localises to the cytoplasm. It carries out the reaction tRNA(Ser) + L-serine + ATP = L-seryl-tRNA(Ser) + AMP + diphosphate + H(+). The enzyme catalyses tRNA(Sec) + L-serine + ATP = L-seryl-tRNA(Sec) + AMP + diphosphate + H(+). Its pathway is aminoacyl-tRNA biosynthesis; selenocysteinyl-tRNA(Sec) biosynthesis; L-seryl-tRNA(Sec) from L-serine and tRNA(Sec): step 1/1. Functionally, catalyzes the attachment of serine to tRNA(Ser). Is also able to aminoacylate tRNA(Sec) with serine, to form the misacylated tRNA L-seryl-tRNA(Sec), which will be further converted into selenocysteinyl-tRNA(Sec). The protein is Serine--tRNA ligase of Mycoplasma mycoides subsp. mycoides SC (strain CCUG 32753 / NCTC 10114 / PG1).